Here is a 649-residue protein sequence, read N- to C-terminus: Drebrin (649 aa).

An N-acetylalanine modification is found at A2. In terms of domain architecture, ADF-H spans 3–134 (GVSFSGHRLE…DAGAIGQRLS (132 aa)). A phosphoserine mark is found at S141 and S142. Composition is skewed to basic and acidic residues over residues 208 to 236 (QERM…EEHR) and 288 to 298 (DNPREFFKQQE). 3 disordered regions span residues 208–420 (QERM…PAED), 477–502 (DLWP…PSGT), and 538–620 (EPPA…PPPV). Phosphothreonine is present on residues T331 and T335. Residues 334–348 (PTRSPSDSSTASTPV) are compositionally biased toward polar residues. Phosphoserine occurs at positions 337, 339, and 345. T346 is subject to Phosphothreonine. A compositionally biased stretch (pro residues) spans 363-374 (QPPPLPPPPPPA). S416 bears the Phosphoserine mark. T497 carries the phosphothreonine modification. The segment covering 582–594 (NGETTQKEGTQAS) has biased composition (polar residues). Phosphoserine is present on S601.

As to quaternary structure, interacts with RUFY3. Interacts with CXCR4; this interaction is enhanced by antigenic stimulation. Interacts (via ADF-H domain) with ZMYND8 (via N-terminus); the interaction leads to sequestering of ZMYND8 in the cytoplasm. As to expression, expressed in the brain, with expression in the molecular layer of the dentate gyrus, stratum pyramidale, and stratum radiatum of the hippocampus (at protein level). Also expressed in the terminal varicosities distributed along dendritic trees of pyramidal cells in CA4 and CA3 of the hippocampus (at protein level). Expressed in pyramidal cells in CA2, CA1 and the subiculum of the hippocampus (at protein level). Expressed in peripheral blood lymphocytes, including T-cells (at protein level). Expressed in the brain. Expressed in the heart, placenta, lung, skeletal muscle, kidney, pancreas, skin fibroblasts, gingival fibroblasts and bone-derived cells.

The protein localises to the cytoplasm. Its subcellular location is the cell projection. It localises to the dendrite. It is found in the cell cortex. The protein resides in the cell junction. The protein localises to the growth cone. In terms of biological role, actin cytoskeleton-organizing protein that plays a role in the formation of cell projections. Required for actin polymerization at immunological synapses (IS) and for the recruitment of the chemokine receptor CXCR4 to IS. Plays a role in dendritic spine morphogenesis and organization, including the localization of the dopamine receptor DRD1 to the dendritic spines. Involved in memory-related synaptic plasticity in the hippocampus. The protein is Drebrin (DBN1) of Homo sapiens (Human).